A 312-amino-acid chain; its full sequence is MEKLVIATRRSQLALWQSEYVKSRLLEHYPNMQIELQEFVTKGDKILDVPLAKIGGKGLFTKELEVAMLEGSAHLAVHSLKDVPTQFEDGLMLAAVTKRFDPRDAFLSNKYTSLEELPKGAIVGTTSLRRRMALKILRPDIELKDLRGNINTRIAKLNAGEYDAIILAATGIQKLGIENEVKYFSPISTDIMIPSMGQATLGIETTNDPKVLEILKVLNDNNAHIESTVERSFVDTLQGGCQVPIGVKATILDENSIRVQAIVGMPDGSEYISEDITADIEDYETIGQNLAQIFIDQGAKELLEKAEKVAFK.

The residue at position 241 (Cys-241) is an S-(dipyrrolylmethanemethyl)cysteine.

This sequence belongs to the HMBS family. As to quaternary structure, monomer. Dipyrromethane is required as a cofactor.

The catalysed reaction is 4 porphobilinogen + H2O = hydroxymethylbilane + 4 NH4(+). It participates in porphyrin-containing compound metabolism; protoporphyrin-IX biosynthesis; coproporphyrinogen-III from 5-aminolevulinate: step 2/4. Its function is as follows. Tetrapolymerization of the monopyrrole PBG into the hydroxymethylbilane pre-uroporphyrinogen in several discrete steps. The chain is Porphobilinogen deaminase from Aliarcobacter butzleri (strain RM4018) (Arcobacter butzleri).